Here is a 188-residue protein sequence, read N- to C-terminus: MAKSTTFFISLTLPFLLLSVVTATYYQSMSPTVLGFQEEKFTHLHFYFHDVVTGPKPSMVIVAEPNGKAKNSLPFGTVVAMDDPLTVGPESDSKLVGKAQGIYTSISQEEMGLMMVMTMAFSDGEFNGSTLSILARNMIMSEPVREMAIVGGTGAFRFARGYAQAKFYSVDFTKGDAIVEYDIFVFHY.

Positions M1 to A23 are cleaved as a signal peptide. N127 carries N-linked (GlcNAc...) asparagine glycosylation.

It belongs to the plant dirigent protein family. Homodimer.

Its subcellular location is the secreted. The protein resides in the extracellular space. It localises to the apoplast. It carries out the reaction a (4R)-4,2'-dihydroxyisoflavan = a pterocarpan + H2O.. The catalysed reaction is (3R,4R)-7,2'-dihydroxy-4'-methoxyisoflavanol = (-)-medicarpin + H2O. It catalyses the reaction (3S,4R)-7,2'-dihydroxy-4'-methoxyisoflavanol = (+)-medicarpin + H2O. The enzyme catalyses (3R,4R)-3-(6-hydroxy-1,3-benzodioxol-5-yl)-3,4-dihydro-2H-chromene-4,7-diol = (-)-maackiain + H2O. It carries out the reaction (3R,4R)-7,2',4'-trihydroxyisoflavanol = (6aR,11aR)-3,9-dihydroxypterocarpan + H2O. Its function is as follows. Involved in pterocarpan phytoalexin biosynthesis. Catalyzes the last step in the biosynthesis of the phytoalexin medicarpin, and thereby contributes to plant defense reactions. Dirigent proteins impart stereoselectivity on the phenoxy radical-coupling reaction, yielding optically active lignans from two molecules of coniferyl alcohol in the biosynthesis of lignans, flavonolignans, and alkaloids and thus plays a central role in plant secondary metabolism. This Glycyrrhiza echinata (Licorice) protein is Pterocarpan synthase 1.